The primary structure comprises 452 residues: tRNA modification GTPase MnmE (452 aa).

R21, E78, and K118 together coordinate (6S)-5-formyl-5,6,7,8-tetrahydrofolate. The 162-residue stretch at 214–375 folds into the TrmE-type G domain; it reads GMKVVIAGRP…LREHLKQSMG (162 aa). N224 contacts K(+). GTP is bound by residues 224-229, 243-249, 268-271, and 333-336; these read NAGKSS, TDIAGTT, DTAG, and NKAD. S228 provides a ligand contact to Mg(2+). Residues T243, I245, and T248 each contribute to the K(+) site. Residue T249 coordinates Mg(2+). K452 contributes to the (6S)-5-formyl-5,6,7,8-tetrahydrofolate binding site.

The protein belongs to the TRAFAC class TrmE-Era-EngA-EngB-Septin-like GTPase superfamily. TrmE GTPase family. In terms of assembly, homodimer. Heterotetramer of two MnmE and two MnmG subunits. K(+) serves as cofactor.

Its subcellular location is the cytoplasm. In terms of biological role, exhibits a very high intrinsic GTPase hydrolysis rate. Involved in the addition of a carboxymethylaminomethyl (cmnm) group at the wobble position (U34) of certain tRNAs, forming tRNA-cmnm(5)s(2)U34. This Pasteurella multocida (strain Pm70) protein is tRNA modification GTPase MnmE.